The sequence spans 557 residues: UvrABC system protein C (557 aa).

Positions 14–89 (EEPGVYIFKN…IKKYRPKYNV (76 aa)) constitute a GIY-YIG domain. The region spanning 194–229 (EEVFDYLKEKMETHSKMLDFENAAKYRDLLLNLSNV) is the UVR domain.

It belongs to the UvrC family. Interacts with UvrB in an incision complex.

Its subcellular location is the cytoplasm. Its function is as follows. The UvrABC repair system catalyzes the recognition and processing of DNA lesions. UvrC both incises the 5' and 3' sides of the lesion. The N-terminal half is responsible for the 3' incision and the C-terminal half is responsible for the 5' incision. This Thermotoga sp. (strain RQ2) protein is UvrABC system protein C.